A 235-amino-acid chain; its full sequence is Large ribosomal subunit protein uL1 (235 aa).

The protein belongs to the universal ribosomal protein uL1 family. As to quaternary structure, part of the 50S ribosomal subunit.

In terms of biological role, binds directly to 23S rRNA. The L1 stalk is quite mobile in the ribosome, and is involved in E site tRNA release. Functionally, protein L1 is also a translational repressor protein, it controls the translation of the L11 operon by binding to its mRNA. The sequence is that of Large ribosomal subunit protein uL1 from Mycobacteroides abscessus (strain ATCC 19977 / DSM 44196 / CCUG 20993 / CIP 104536 / JCM 13569 / NCTC 13031 / TMC 1543 / L948) (Mycobacterium abscessus).